A 501-amino-acid chain; its full sequence is Protein YLS7 (501 aa).

Residues isoleucine 25–threonine 45 traverse the membrane as a helical; Signal-anchor for type II membrane protein segment. A disordered region spans residues histidine 69 to glutamine 131. The segment covering proline 78–valine 89 has biased composition (low complexity). Residues serine 94–glutamate 113 show a composition bias toward basic and acidic residues. The span at glutamate 114–serine 124 shows a compositional bias: polar residues. Residues glycine 211 to serine 213 carry the GDS motif motif. The disordered stretch occupies residues arginine 438–aspartate 467. Basic and acidic residues predominate over residues proline 449–proline 459. Residues aspartate 467–asparagine 481 carry the DCXHWCLPGXXDXWN motif motif.

This sequence belongs to the PC-esterase family. TBL subfamily. As to expression, expressed in roots, cauline leaves and flowers.

It localises to the membrane. In terms of biological role, may act as a bridging protein that binds pectin and other cell wall polysaccharides. Probably involved in maintaining esterification of pectins. May be involved in the specific O-acetylation of cell wall polymers. The polypeptide is Protein YLS7 (YLS7) (Arabidopsis thaliana (Mouse-ear cress)).